We begin with the raw amino-acid sequence, 118 residues long: Large ribosomal subunit protein uL18 (118 aa).

The protein belongs to the universal ribosomal protein uL18 family. As to quaternary structure, part of the 50S ribosomal subunit; part of the 5S rRNA/L5/L18/L25 subcomplex. Contacts the 5S and 23S rRNAs.

This is one of the proteins that bind and probably mediate the attachment of the 5S RNA into the large ribosomal subunit, where it forms part of the central protuberance. In Dichelobacter nodosus (strain VCS1703A), this protein is Large ribosomal subunit protein uL18.